The sequence spans 77 residues: Small ribosomal subunit protein uS17 (77 aa).

This sequence belongs to the universal ribosomal protein uS17 family. As to quaternary structure, part of the 30S ribosomal subunit.

In terms of biological role, one of the primary rRNA binding proteins, it binds specifically to the 5'-end of 16S ribosomal RNA. This chain is Small ribosomal subunit protein uS17, found in Rickettsia akari (strain Hartford).